A 176-amino-acid chain; its full sequence is ATP-dependent protease subunit HslV (176 aa).

Threonine 2 is a catalytic residue. Alanine 157, cysteine 160, and threonine 163 together coordinate Na(+).

It belongs to the peptidase T1B family. HslV subfamily. As to quaternary structure, a double ring-shaped homohexamer of HslV is capped on each side by a ring-shaped HslU homohexamer. The assembly of the HslU/HslV complex is dependent on binding of ATP.

The protein localises to the cytoplasm. The enzyme catalyses ATP-dependent cleavage of peptide bonds with broad specificity.. Its activity is regulated as follows. Allosterically activated by HslU binding. Functionally, protease subunit of a proteasome-like degradation complex believed to be a general protein degrading machinery. The protein is ATP-dependent protease subunit HslV of Buchnera aphidicola subsp. Acyrthosiphon pisum (strain APS) (Acyrthosiphon pisum symbiotic bacterium).